The chain runs to 28 residues: Arylalkyl acylamidase (28 aa).

In terms of assembly, homotetramer.

It carries out the reaction an N-acetylarylalkylamine + H2O = an aralkylamine + acetate. Activated by divalent metal ions. Inhibited by certain thiol reagents. In terms of biological role, shows a strict specificity for N-acetyl arylalkylamines but not acetanilide derivatives. This is Arylalkyl acylamidase from Pseudomonas putida (Arthrobacter siderocapsulatus).